A 163-amino-acid chain; its full sequence is Phosphopantetheine adenylyltransferase (163 aa).

T9 lines the substrate pocket. ATP-binding positions include 9–10 and H17; that span reads TF. Substrate-binding residues include K41, L73, and R87. ATP-binding positions include 88 to 90, E98, and 123 to 129; these read GLR and YQFISGT.

It belongs to the bacterial CoaD family. Homohexamer. Mg(2+) is required as a cofactor.

It localises to the cytoplasm. The catalysed reaction is (R)-4'-phosphopantetheine + ATP + H(+) = 3'-dephospho-CoA + diphosphate. It functions in the pathway cofactor biosynthesis; coenzyme A biosynthesis; CoA from (R)-pantothenate: step 4/5. Reversibly transfers an adenylyl group from ATP to 4'-phosphopantetheine, yielding dephospho-CoA (dPCoA) and pyrophosphate. This Herminiimonas arsenicoxydans protein is Phosphopantetheine adenylyltransferase.